The following is a 678-amino-acid chain: Probable 3',5'-cyclic phosphodiesterase pde-3 (678 aa).

3 disordered regions span residues 1-27 (MSPG…FQPT), 52-95 (AEMR…VLGG), and 223-250 (TVPA…NEHE). Over residues 7–19 (AVGGVSPPVMVPG) the composition is skewed to low complexity. Polar residues-rich tracts occupy residues 60–85 (TATS…NSGV) and 231–246 (ARSS…PSNN). One can recognise a PDEase domain in the interval 281-632 (RYDTRELDTD…RKWKEQIELE (352 aa)). His-356 acts as the Proton donor in catalysis. A divalent metal cation-binding residues include His-360, His-421, Asp-422, and Asp-531. Residues 654–678 (EEESASTSDSPDPRRDSPLDSDLSQ) are disordered.

The protein belongs to the cyclic nucleotide phosphodiesterase family. The cofactor is a divalent metal cation.

The catalysed reaction is a nucleoside 3',5'-cyclic phosphate + H2O = a nucleoside 5'-phosphate + H(+). The polypeptide is Probable 3',5'-cyclic phosphodiesterase pde-3 (pde-3) (Caenorhabditis elegans).